We begin with the raw amino-acid sequence, 359 residues long: Histidinol-phosphate aminotransferase (359 aa).

Lys-217 is modified (N6-(pyridoxal phosphate)lysine).

This sequence belongs to the class-II pyridoxal-phosphate-dependent aminotransferase family. Histidinol-phosphate aminotransferase subfamily. As to quaternary structure, homodimer. Pyridoxal 5'-phosphate serves as cofactor.

The enzyme catalyses L-histidinol phosphate + 2-oxoglutarate = 3-(imidazol-4-yl)-2-oxopropyl phosphate + L-glutamate. The protein operates within amino-acid biosynthesis; L-histidine biosynthesis; L-histidine from 5-phospho-alpha-D-ribose 1-diphosphate: step 7/9. The chain is Histidinol-phosphate aminotransferase from Salmonella choleraesuis (strain SC-B67).